A 786-amino-acid chain; its full sequence is DENN domain-containing protein 1C (786 aa).

Residues 13–158 (FDWFFEAGCP…MDSSITVRSE (146 aa)) form the uDENN domain. In terms of domain architecture, cDENN spans 182–318 (SLPSIPENRN…VVSLLRLRLR (137 aa)). Residues 320 to 398 (VALSPGEGVS…ESRLEKLNAG (79 aa)) form the dDENN domain. Residues 401-405 (FSDQF) carry the FXDXF motif motif. A disordered region spans residues 481–553 (KDGDSGLQRG…LSPGDTQNPW (73 aa)). A compositionally biased stretch (basic and acidic residues) spans 527–541 (LKTEEGPSEPLRERS). Over residues 542–552 (PTLSPGDTQNP) the composition is skewed to polar residues. Residue serine 565 is modified to Phosphoserine. The Clathrin box signature appears at 570–579 (DLLSEILDSL). 2 disordered regions span residues 653–741 (YSKN…QPPQ) and 762–786 (SHVSTQQRPQDKQPRVADLKKCFEN). Over residues 657 to 675 (SCSQPFQQSPPSQGDPGPS) the composition is skewed to low complexity. The segment covering 706–740 (LLVSTEPNSDAVQRLQSISSPSCSHSAENPRNQPP) has biased composition (polar residues). Basic and acidic residues predominate over residues 770-786 (PQDKQPRVADLKKCFEN).

Exhibits low nucleotide-independent RAB35-binding activity. Interacts with clathrin heavy chain/CLTC and with AP2A2, but not with AP2B1.

The protein localises to the cytoplasm. It localises to the cytosol. The protein resides in the cytoplasmic vesicle. Its subcellular location is the clathrin-coated vesicle. Its function is as follows. Guanine nucleotide exchange factor (GEF) which may activate RAB8A, RAB13 and RAB35. Promotes the exchange of GDP to GTP, converting inactive GDP-bound Rab proteins into their active GTP-bound form. The polypeptide is DENN domain-containing protein 1C (Dennd1c) (Mus musculus (Mouse)).